We begin with the raw amino-acid sequence, 106 residues long: UPF0145 protein APL_0465 (106 aa).

Belongs to the UPF0145 family.

The chain is UPF0145 protein APL_0465 from Actinobacillus pleuropneumoniae serotype 5b (strain L20).